The primary structure comprises 811 residues: TLR4 interactor with leucine rich repeats (811 aa).

The N-terminal stretch at 1–25 is a signal peptide; that stretch reads MEAARALRLLLVVCGCLALPPLAEP. The LRRNT domain maps to 26-57; the sequence is VCPERCDCQHPQHLLCTNRGLRVVPKTSSLPS. The Extracellular segment spans residues 26-696; sequence VCPERCDCQH…AGSRGGVDYQ (671 aa). 12 LRR repeats span residues 61 to 81, 84 to 105, 108 to 129, 132 to 153, 156 to 177, 180 to 201, 204 to 223, 230 to 251, 254 to 275, 278 to 299, 302 to 323, and 326 to 347; these read VLTYSLGGNFITNITAFDFHR, QLRRLDLQYNQIRSLHPKTFEK, RLEELYLGNNLLQALAPGTLAP, KLRILYANGNEISRLSRGSFEG, SLVKLRLDGNALGALPDAVFAP, NLLYLHLESNRIRFLGKNAFAQ, KLRFLNLSANELQPSLRHAA, SLSSLILSANNLQHLGPRIFQH, RLGLLSLRGNQLTHLAPEAFWG, ALRELRLEGNRLSQLPTALLEP, SLEALDLSGNELSALHPATFGH, and RLRELSLRNNALSALSGDIFAA. Asparagine 73 carries N-linked (GlcNAc...) asparagine glycosylation. Residue asparagine 209 is glycosylated (N-linked (GlcNAc...) asparagine). The LRRCT domain occupies 359–416; that stretch reads NGWTCDCRLRGLKRWMGDWHSQGRLLTVFVQCRHPPALRGKYLDYLDDQQLQNGSCAD. The tract at residues 484–549 is disordered; that stretch reads LSRRGPGLQQ…PSPAGDPWQR (66 aa). Low complexity-rich tracts occupy residues 492–508 and 530–544; these read QQPSPSVAAAAGPAPQS and PTPTASPGSAPSPAG. Asparagine 589 carries an N-linked (GlcNAc...) asparagine glycan. The chain crosses the membrane as a helical span at residues 697–717; it reads LLTLALLTVNALLVLLALAAW. The Cytoplasmic segment spans residues 718-811; that stretch reads ASRWLRRKLR…EDRLLQRFAD (94 aa). Serine 798 is modified (phosphoserine).

As to quaternary structure, belongs to the lipopolysaccharide (LPS) receptor, a multi-protein complex containing at least CD14, MD-2 and TLR4. Interacts with TLR4; this interaction is greatly enhanced by LPS stimulation. Interacts with LPS. Post-translationally, N-glycolysaled. Highly expressed in the brain, ovary, small intestine and spleen.

It localises to the membrane. Its function is as follows. Component of the TLR4 signaling complex. Mediates the innate immune response to bacterial lipopolysaccharide (LPS) leading to cytokine secretion. This is TLR4 interactor with leucine rich repeats (TRIL) from Homo sapiens (Human).